Consider the following 379-residue polypeptide: Homoserine O-succinyltransferase (379 aa).

An AB hydrolase-1 domain is found at 48–357; it reads NAVLICHALS…SAHGHDAFLM (310 aa). The Nucleophile role is filled by Ser154. Arg224 provides a ligand contact to substrate. Catalysis depends on residues Asp319 and His352. Substrate is bound at residue Asp353.

Belongs to the AB hydrolase superfamily. MetX family. In terms of assembly, homodimer.

Its subcellular location is the cytoplasm. It carries out the reaction L-homoserine + succinyl-CoA = O-succinyl-L-homoserine + CoA. Its pathway is amino-acid biosynthesis; L-methionine biosynthesis via de novo pathway; O-succinyl-L-homoserine from L-homoserine: step 1/1. Activity increases in the presence of MetW. Transfers a succinyl group from succinyl-CoA to L-homoserine, forming succinyl-L-homoserine. The polypeptide is Homoserine O-succinyltransferase (Neisseria gonorrhoeae).